Here is a 279-residue protein sequence, read N- to C-terminus: Diaminopimelate epimerase (279 aa).

Residues Asn-13 and Asn-66 each contribute to the substrate site. Cys-75 (proton donor) is an active-site residue. Substrate contacts are provided by residues 76–77 (GN), Asn-164, Asn-197, and 215–216 (ER). Cys-224 functions as the Proton acceptor in the catalytic mechanism. 225–226 (GT) is a binding site for substrate.

This sequence belongs to the diaminopimelate epimerase family. Homodimer.

It localises to the cytoplasm. The catalysed reaction is (2S,6S)-2,6-diaminopimelate = meso-2,6-diaminopimelate. The protein operates within amino-acid biosynthesis; L-lysine biosynthesis via DAP pathway; DL-2,6-diaminopimelate from LL-2,6-diaminopimelate: step 1/1. Its function is as follows. Catalyzes the stereoinversion of LL-2,6-diaminopimelate (L,L-DAP) to meso-diaminopimelate (meso-DAP), a precursor of L-lysine and an essential component of the bacterial peptidoglycan. The chain is Diaminopimelate epimerase from Nostoc punctiforme (strain ATCC 29133 / PCC 73102).